The sequence spans 292 residues: Phosphatidylglycerol--prolipoprotein diacylglyceryl transferase (292 aa).

Transmembrane regions (helical) follow at residues 25–45, 70–90, 102–122, 138–158, 193–213, 217–237, and 255–275; these read ITLH…WWYA, FVVW…VLVW, IIAV…IIIA, FDII…CNFI, FMEG…FKAF, GTVS…SEVY, and GFTY…YLLL. Arginine 153 lines the a 1,2-diacyl-sn-glycero-3-phospho-(1'-sn-glycerol) pocket.

The protein belongs to the Lgt family.

The protein localises to the cell inner membrane. It carries out the reaction L-cysteinyl-[prolipoprotein] + a 1,2-diacyl-sn-glycero-3-phospho-(1'-sn-glycerol) = an S-1,2-diacyl-sn-glyceryl-L-cysteinyl-[prolipoprotein] + sn-glycerol 1-phosphate + H(+). The protein operates within protein modification; lipoprotein biosynthesis (diacylglyceryl transfer). In terms of biological role, catalyzes the transfer of the diacylglyceryl group from phosphatidylglycerol to the sulfhydryl group of the N-terminal cysteine of a prolipoprotein, the first step in the formation of mature lipoproteins. The protein is Phosphatidylglycerol--prolipoprotein diacylglyceryl transferase of Bartonella tribocorum (strain CIP 105476 / IBS 506).